Reading from the N-terminus, the 270-residue chain is PspA protein (270 aa).

Residues 238 to 270 (MRGEALPAGGTTATPRPATETSGGAIAEQPYGQ) form a disordered region. Over residues 240 to 258 (GEALPAGGTTATPRPATET) the composition is skewed to low complexity.

The protein belongs to the PspA/Vipp/IM30 family.

It localises to the cytoplasm. Its function is as follows. Involved in resistance to stress. Associates with and regulates lipid droplets (LDs) homeostasis under conditions of stress and may regulate non-replicating persistence (NRP). Could be involved in preservation of envelope integrity and tolerance to surface stress. The sequence is that of PspA protein from Mycobacterium tuberculosis (strain ATCC 25177 / H37Ra).